A 309-amino-acid polypeptide reads, in one-letter code: Dihydroorotate dehydrogenase B (NAD(+)), catalytic subunit (309 aa).

FMN-binding positions include S21 and 45–46; that span reads KA. Residues K45 and 69-73 each bind substrate; that span reads NAIGL. FMN-binding residues include N99 and N127. A substrate-binding site is contributed by N127. The Nucleophile role is filled by C130. K165 and I191 together coordinate FMN. 192–193 is a binding site for substrate; it reads NT. FMN contacts are provided by residues G217, 243-244, and 265-266; these read GG and GT.

It belongs to the dihydroorotate dehydrogenase family. Type 1 subfamily. As to quaternary structure, heterotetramer of 2 PyrK and 2 PyrD type B subunits. The cofactor is FMN.

It is found in the cytoplasm. It catalyses the reaction (S)-dihydroorotate + NAD(+) = orotate + NADH + H(+). The protein operates within pyrimidine metabolism; UMP biosynthesis via de novo pathway; orotate from (S)-dihydroorotate (NAD(+) route): step 1/1. In terms of biological role, catalyzes the conversion of dihydroorotate to orotate with NAD(+) as electron acceptor. The protein is Dihydroorotate dehydrogenase B (NAD(+)), catalytic subunit (pyrD) of Bacillus mycoides (strain KBAB4) (Bacillus weihenstephanensis).